The chain runs to 150 residues: CASP-like protein 2 (150 aa).

Residues 1–17 (MKPEAGDGRSGWRWVAT) are Cytoplasmic-facing. Residues 18–38 (FDLILRLAAIVATSTAVLAAM) form a helical membrane-spanning segment. At 39 to 41 (GKT) the chain is on the extracellular side. The helical transmembrane segment at 42-62 (FVVVVNGVACFYLLMSLPVSI) threads the bilayer. Over 63–82 (FNIMRPGACPANRAVLTALD) the chain is Cytoplasmic. Residues 83 to 103 (MVTVALVTAGALVAGILYLVH) traverse the membrane as a helical segment. Residues 104-121 (KAGDTHADWFSIWSQLDS) lie on the Extracellular side of the membrane. A helical transmembrane segment spans residues 122–142 (LSYLAVLALILHVLLSGSILY). Residues 143 to 150 (KQALNIMF) lie on the Cytoplasmic side of the membrane.

It belongs to the Casparian strip membrane proteins (CASP) family. In terms of assembly, homodimer and heterodimers.

It is found in the cell membrane. This Picea sitchensis (Sitka spruce) protein is CASP-like protein 2.